The following is a 141-amino-acid chain: Large ribosomal subunit protein uL11 (141 aa).

It belongs to the universal ribosomal protein uL11 family. As to quaternary structure, part of the ribosomal stalk of the 50S ribosomal subunit. Interacts with L10 and the large rRNA to form the base of the stalk. L10 forms an elongated spine to which L12 dimers bind in a sequential fashion forming a multimeric L10(L12)X complex. One or more lysine residues are methylated.

In terms of biological role, forms part of the ribosomal stalk which helps the ribosome interact with GTP-bound translation factors. The polypeptide is Large ribosomal subunit protein uL11 (Helicobacter pylori (strain P12)).